A 31-amino-acid chain; its full sequence is U13-ctenitoxin-Pn1b (31 aa).

Cystine bridges form between C3–C17, C10–C21, and C16–C30.

In terms of tissue distribution, expressed by the venom gland.

The protein resides in the secreted. Acts as a neurotoxin. The sequence is that of U13-ctenitoxin-Pn1b from Phoneutria nigriventer (Brazilian armed spider).